The chain runs to 632 residues: 1-deoxy-D-xylulose-5-phosphate synthase (632 aa).

Thiamine diphosphate contacts are provided by residues His75 and 117 to 119 (GHA). Asp146 contributes to the Mg(2+) binding site. Thiamine diphosphate is bound by residues 147–148 (AA), Asn175, and Glu370. Position 175 (Asn175) interacts with Mg(2+).

This sequence belongs to the transketolase family. DXPS subfamily. As to quaternary structure, homodimer. Mg(2+) is required as a cofactor. Requires thiamine diphosphate as cofactor.

It catalyses the reaction D-glyceraldehyde 3-phosphate + pyruvate + H(+) = 1-deoxy-D-xylulose 5-phosphate + CO2. Its pathway is metabolic intermediate biosynthesis; 1-deoxy-D-xylulose 5-phosphate biosynthesis; 1-deoxy-D-xylulose 5-phosphate from D-glyceraldehyde 3-phosphate and pyruvate: step 1/1. Catalyzes the acyloin condensation reaction between C atoms 2 and 3 of pyruvate and glyceraldehyde 3-phosphate to yield 1-deoxy-D-xylulose-5-phosphate (DXP). The polypeptide is 1-deoxy-D-xylulose-5-phosphate synthase (Chlamydia muridarum (strain MoPn / Nigg)).